We begin with the raw amino-acid sequence, 455 residues long: Homeobox protein 14 (455 aa).

Composition is skewed to low complexity over residues 1-16, 24-39, 81-118, 179-239, and 263-294; these read MNHN…KNNS, SSRS…SSSG, TTTT…ESPN, ESPN…SPSF, and NNNN…TNNN. 4 disordered regions span residues 1-53, 67-121, 178-239, and 258-296; these read MNHN…SSIN, KQTK…NCNK, SESP…SPSF, and TLLS…NNGD. DNA-binding regions (homeobox) lie at residues 310–369 and 372–431; these read KSGQ…SKSG and SYAK…NKLS. A disordered region spans residues 431 to 455; the sequence is SSKANQDNDNNNNNENNDDSYSDEG. Over residues 435-445 the composition is skewed to low complexity; the sequence is NQDNDNNNNNE. The segment covering 446–455 has biased composition (acidic residues); sequence NNDDSYSDEG.

It localises to the nucleus. In terms of biological role, putative transcription factor. This is Homeobox protein 14 (hbx14) from Dictyostelium discoideum (Social amoeba).